Reading from the N-terminus, the 424-residue chain is Histidine--tRNA ligase (424 aa).

The protein belongs to the class-II aminoacyl-tRNA synthetase family. Homodimer.

It is found in the cytoplasm. The enzyme catalyses tRNA(His) + L-histidine + ATP = L-histidyl-tRNA(His) + AMP + diphosphate + H(+). The polypeptide is Histidine--tRNA ligase (Salmonella arizonae (strain ATCC BAA-731 / CDC346-86 / RSK2980)).